We begin with the raw amino-acid sequence, 531 residues long: Acyl-CoA ligase azaF (531 aa).

Residue 188–199 coordinates AMP; sequence RLFSSGTTGLPK. An AMP-binding region spans residues 449-525; the sequence is EVEGVLRNHP…DAIPRNASGK (77 aa).

It belongs to the ATP-dependent AMP-binding enzyme family.

Its pathway is secondary metabolite biosynthesis. Its function is as follows. Acyl-CoA ligase; part of the gene cluster that mediates the biosynthesis of azaphilones, a class of fungal metabolites characterized by a highly oxygenated pyrano-quinone bicyclic core and exhibiting a broad range of bioactivities. In the first step, the non-reducing polyketide synthase azaA forms the hexaketide precursor from successive condensations of five malonyl-CoA units, presumably with a simple acetyl-CoA starter unit. The reactive polyketide chain then undergoes a PT-mediated C2-C7 cyclization to afford the aromatic ring and is eventually released as an aldehyde through the R-domain. The putative ketoreductase azaE is proposed to catalyze the reduction of the terminal ketone resulting in the early culture product FK17-P2a. The monooxygenase azaH was demonstrated to be the only enzyme required to convert FK17-P2a to azanigerone E. AzaH first hydroxylates the benzaldehyde intermediate FK17-P2a at C4, which triggers the formation of the pyran-ring to afford azanigerone E. In parallel, the 2,4-dimethylhexanoyl chain is synthesized by the HR-PKS azaB and is proposed to be transferred to the C4-hydroxyl of azanigerone E by the acyltransferase azaD directly from the ACP domain of azaB. Alternatively, the 2,4-dimethyl-hexanoyl chain may be offloaded from the HR-PKS as a carboxylic acid and converted to an acyl-CoA by azaF. The resulting acyl-CoA molecule could then be taken up as a substrate by AzaD to form azanigerone B. To yield the carboxylic acid substituent in azanigerone A, the hydroxypropyl side chain of azanigerone B would need to undergo a C-C oxidative cleavage catalyzed by cytochrome P450 AzaI. AzaI is proposed to act on a vicinal diol that leads to a C-C bond scission either through an alkoxyradical intermediate or a peroxy complex. In the biosynthesis of azanigerone A, azanigerone B first undergoes hydroxylation at C10, possibly catalyzed by one of the two FAD-dependent monooxygenases encoded in the cluster, azaG or azaL, resulting in the vicinal diol azanigerone C. Oxidative cleavage of azanigerone C by azaI would yield the corresponding aldehyde derivative of azanigerone A. Finally, the dehydrogenase azaJ is proposed to convert the aldehyde functional group into the carboxylic acid, completing the conversion from azanigerone B to azanigerone A. Alternatively, the oxidation of aldehyde to carboxylic acid may be catalyzed by the same P450 enzyme azaI via consecutive oxidation or by endogenous alcohol dehydrogenase. The polypeptide is Acyl-CoA ligase azaF (Aspergillus niger (strain ATCC 1015 / CBS 113.46 / FGSC A1144 / LSHB Ac4 / NCTC 3858a / NRRL 328 / USDA 3528.7)).